Here is a 515-residue protein sequence, read N- to C-terminus: Histidine ammonia-lyase (515 aa).

The segment at residues 142-144 (ASG) is a cross-link (5-imidazolinone (Ala-Gly)). S143 bears the 2,3-didehydroalanine (Ser) mark.

It belongs to the PAL/histidase family. In terms of processing, contains an active site 4-methylidene-imidazol-5-one (MIO), which is formed autocatalytically by cyclization and dehydration of residues Ala-Ser-Gly.

The protein resides in the cytoplasm. The catalysed reaction is L-histidine = trans-urocanate + NH4(+). It participates in amino-acid degradation; L-histidine degradation into L-glutamate; N-formimidoyl-L-glutamate from L-histidine: step 1/3. This Bradyrhizobium sp. (strain BTAi1 / ATCC BAA-1182) protein is Histidine ammonia-lyase.